The sequence spans 496 residues: Polyphosphate:AMP phosphotransferase (496 aa).

PPK2 regions lie at residues 11-234 and 269-495; these read IDKD…LQAA and LDKD…YKKD.

This sequence belongs to the polyphosphate kinase 2 (PPK2) family. Class II subfamily. As to quaternary structure, homodimer. Mg(2+) serves as cofactor.

The catalysed reaction is [phosphate](n) + ADP = [phosphate](n+1) + AMP. Uses inorganic polyphosphate (polyP) as a donor to convert AMP to ADP. Can also convert GMP to GDP, with lower efficiency. Cannot dephosphorylate ADP in the presence of polyP. The protein is Polyphosphate:AMP phosphotransferase of Pseudomonas aeruginosa (strain ATCC 15692 / DSM 22644 / CIP 104116 / JCM 14847 / LMG 12228 / 1C / PRS 101 / PAO1).